A 170-amino-acid chain; its full sequence is Protein GrpE (170 aa).

The interval 1–29 (MSEEIKNEEIVEEVEATEEVVETPEKSEL) is disordered. Acidic residues predominate over residues 10-22 (IVEEVEATEEVVE).

It belongs to the GrpE family. As to quaternary structure, homodimer.

The protein localises to the cytoplasm. In terms of biological role, participates actively in the response to hyperosmotic and heat shock by preventing the aggregation of stress-denatured proteins, in association with DnaK and GrpE. It is the nucleotide exchange factor for DnaK and may function as a thermosensor. Unfolded proteins bind initially to DnaJ; upon interaction with the DnaJ-bound protein, DnaK hydrolyzes its bound ATP, resulting in the formation of a stable complex. GrpE releases ADP from DnaK; ATP binding to DnaK triggers the release of the substrate protein, thus completing the reaction cycle. Several rounds of ATP-dependent interactions between DnaJ, DnaK and GrpE are required for fully efficient folding. This chain is Protein GrpE, found in Streptococcus suis (strain 98HAH33).